A 327-amino-acid polypeptide reads, in one-letter code: ATPase GET3 (327 aa).

Residue 27–34 (KGGVGKTT) participates in ATP binding. Asp56 is a catalytic residue. Positions 231 and 258 each coordinate ATP. Cys269 and Cys272 together coordinate Zn(2+).

Belongs to the arsA ATPase family. In terms of assembly, homodimer. Component of the Golgi to ER traffic (GET) complex, which is composed of GET1, GET2 and GET3. Within the complex, GET1 and GET2 form a heterotetramer which is stabilized by phosphatidylinositol binding and which binds to the GET3 homodimer. Interacts with the chloride channel protein GEF1.

The protein localises to the cytoplasm. It localises to the endoplasmic reticulum. Its subcellular location is the golgi apparatus. Its function is as follows. ATPase required for the post-translational delivery of tail-anchored (TA) proteins to the endoplasmic reticulum. Recognizes and selectively binds the transmembrane domain of TA proteins in the cytosol. This complex then targets to the endoplasmic reticulum by membrane-bound receptors GET1 and GET2, where the tail-anchored protein is released for insertion. This process is regulated by ATP binding and hydrolysis. ATP binding drives the homodimer towards the closed dimer state, facilitating recognition of newly synthesized TA membrane proteins. ATP hydrolysis is required for insertion. Subsequently, the homodimer reverts towards the open dimer state, lowering its affinity for the GET1-GET2 receptor, and returning it to the cytosol to initiate a new round of targeting. Cooperates with the HDEL receptor ERD2 to mediate the ATP-dependent retrieval of resident ER proteins that contain a C-terminal H-D-E-L retention signal from the Golgi to the ER. Involved in low-level resistance to the oxyanions arsenite and arsenate, and in heat tolerance. In Yarrowia lipolytica (strain CLIB 122 / E 150) (Yeast), this protein is ATPase GET3.